The primary structure comprises 1334 residues: Lysine-specific demethylase 3A-B (1334 aa).

3 disordered regions span residues 243 to 288 (DQND…KTSF), 352 to 382 (PGIQ…SQNL), and 514 to 533 (KPQE…VTYP). Residues 267-283 (TEVKQTRNEEVPSKDVT) are compositionally biased toward basic and acidic residues. The C6-type zinc-finger motif lies at 684–709 (CDACDTTIFNLHWVCPKCGFGVCVDC). Positions 897–901 (LRNLL) match the LXXLL motif motif. In terms of domain architecture, JmjC spans 1089 to 1294 (RREGKLNLAA…HCFCLTQEFR (206 aa)). 3 residues coordinate Fe cation: His1133, Asp1135, and His1262.

This sequence belongs to the JHDM2 histone demethylase family. Fe(2+) is required as a cofactor.

The protein resides in the cytoplasm. It is found in the nucleus. The catalysed reaction is N(6),N(6)-dimethyl-L-lysyl(9)-[histone H3] + 2 2-oxoglutarate + 2 O2 = L-lysyl(9)-[histone H3] + 2 formaldehyde + 2 succinate + 2 CO2. Its function is as follows. Histone demethylase that specifically demethylates 'Lys-9' of histone H3, thereby playing a central role in histone code. Preferentially demethylates mono- and dimethylated H3 'Lys-9' residue, with a preference for dimethylated residue, while it has weak or no activity on trimethylated H3 'Lys-9'. Demethylation of Lys residue generates formaldehyde and succinate. The chain is Lysine-specific demethylase 3A-B (kdm3a-b) from Xenopus laevis (African clawed frog).